The sequence spans 202 residues: Recombination protein RecR (202 aa).

The C4-type zinc-finger motif lies at 56 to 71 (CVVCGTVSDGELCRIC). A Toprim domain is found at 79–179 (TMICVVEEPK…TVTRLASGLP (101 aa)).

Belongs to the RecR family.

Its function is as follows. May play a role in DNA repair. It seems to be involved in an RecBC-independent recombinational process of DNA repair. It may act with RecF and RecO. The polypeptide is Recombination protein RecR (Nocardia farcinica (strain IFM 10152)).